The following is a 447-amino-acid chain: Phosphoglucosamine mutase (447 aa).

The Phosphoserine intermediate role is filled by S104. S104, D243, D245, and D247 together coordinate Mg(2+). A Phosphoserine modification is found at S104.

This sequence belongs to the phosphohexose mutase family. Mg(2+) serves as cofactor. Activated by phosphorylation.

It catalyses the reaction alpha-D-glucosamine 1-phosphate = D-glucosamine 6-phosphate. Catalyzes the conversion of glucosamine-6-phosphate to glucosamine-1-phosphate. This is Phosphoglucosamine mutase from Corynebacterium diphtheriae (strain ATCC 700971 / NCTC 13129 / Biotype gravis).